A 364-amino-acid chain; its full sequence is tRNA-specific 2-thiouridylase MnmA (364 aa).

ATP contacts are provided by residues 6-13 and L32; that span reads AMSGGVDS. The Nucleophile role is filled by C101. C101 and C193 are disulfide-bonded. Residue G125 participates in ATP binding. Positions 143 to 145 are interaction with tRNA; that stretch reads KDQ. Catalysis depends on C193, which acts as the Cysteine persulfide intermediate.

Belongs to the MnmA/TRMU family.

Its subcellular location is the cytoplasm. It catalyses the reaction S-sulfanyl-L-cysteinyl-[protein] + uridine(34) in tRNA + AH2 + ATP = 2-thiouridine(34) in tRNA + L-cysteinyl-[protein] + A + AMP + diphosphate + H(+). Its function is as follows. Catalyzes the 2-thiolation of uridine at the wobble position (U34) of tRNA, leading to the formation of s(2)U34. The protein is tRNA-specific 2-thiouridylase MnmA of Rhodococcus jostii (strain RHA1).